The sequence spans 88 residues: Secretion system apparatus protein SsaS (88 aa).

Transmembrane regions (helical) follow at residues 15 to 35 and 55 to 75; these read WIVL…GVIV and LLAI…ILLN.

Belongs to the FliQ/MopD/SpaQ family.

It localises to the cell membrane. Part of a type III secretion system. The sequence is that of Secretion system apparatus protein SsaS (ssaS) from Salmonella typhimurium (strain LT2 / SGSC1412 / ATCC 700720).